A 414-amino-acid polypeptide reads, in one-letter code: uncharacterized protein (414 aa).

Belongs to the MG032/MG096/MG288 family.

This is an uncharacterized protein from Mycoplasma genitalium (strain ATCC 33530 / DSM 19775 / NCTC 10195 / G37) (Mycoplasmoides genitalium).